The sequence spans 146 residues: Deoxyuridine 5'-triphosphate nucleotidohydrolase (146 aa).

Substrate is bound by residues 66 to 68 (RSG), Asn79, 83 to 85 (TID), and Lys93.

The protein belongs to the dUTPase family. It depends on Mg(2+) as a cofactor.

The enzyme catalyses dUTP + H2O = dUMP + diphosphate + H(+). The protein operates within pyrimidine metabolism; dUMP biosynthesis; dUMP from dCTP (dUTP route): step 2/2. In terms of biological role, this enzyme is involved in nucleotide metabolism: it produces dUMP, the immediate precursor of thymidine nucleotides and it decreases the intracellular concentration of dUTP so that uracil cannot be incorporated into DNA. This is Deoxyuridine 5'-triphosphate nucleotidohydrolase from Zymomonas mobilis subsp. mobilis (strain ATCC 31821 / ZM4 / CP4).